Here is a 146-residue protein sequence, read N- to C-terminus: Large ribosomal subunit protein uL15 (146 aa).

The disordered stretch occupies residues 1 to 58 (MKLNELSPPKGARTARKRKGRGPGSGLGKTAGKGHKGQKARSGGGVRPGFEGGQMPVH). Gly residues-rich tracts occupy residues 22–31 (GPGSGLGKTA) and 42–52 (SGGGVRPGFEG).

It belongs to the universal ribosomal protein uL15 family. As to quaternary structure, part of the 50S ribosomal subunit.

Binds to the 23S rRNA. This Desulfatibacillum aliphaticivorans protein is Large ribosomal subunit protein uL15.